Here is a 130-residue protein sequence, read N- to C-terminus: Cytidine deaminase (130 aa).

The region spanning 3-130 (VNLEWIIKQL…ELLMNGFKKS (128 aa)) is the CMP/dCMP-type deaminase domain. A substrate-binding site is contributed by 43–45 (NIE). Cys54 is a Zn(2+) binding site. Glu56 functions as the Proton donor in the catalytic mechanism. Positions 88 and 91 each coordinate Zn(2+).

This sequence belongs to the cytidine and deoxycytidylate deaminase family. As to quaternary structure, homodimer. The cofactor is Zn(2+).

The enzyme catalyses cytidine + H2O + H(+) = uridine + NH4(+). The catalysed reaction is 2'-deoxycytidine + H2O + H(+) = 2'-deoxyuridine + NH4(+). This enzyme scavenges exogenous and endogenous cytidine and 2'-deoxycytidine for UMP synthesis. The chain is Cytidine deaminase (cdd) from Mycoplasma genitalium (strain ATCC 33530 / DSM 19775 / NCTC 10195 / G37) (Mycoplasmoides genitalium).